The following is a 174-amino-acid chain: Protein C2-DOMAIN ABA-RELATED 2 (174 aa).

Position 1 is an N-acetylmethionine (methionine 1). One can recognise a C2 domain in the interval 1–104 (MENMLGLLRL…EAIRIQNQLG (104 aa)). Ca(2+) is bound by residues arginine 21, aspartate 22, aspartate 27, aspartate 73, arginine 74, aspartate 75, and aspartate 81.

This sequence belongs to the plant CAR protein family. In terms of assembly, binds to PYR/PYL/RCAR abscisic acid intracellular receptors in an ABA-independent manner, both at the plasma membrane and in the nucleus. Ca(2+) serves as cofactor.

Its subcellular location is the cell membrane. It is found in the nucleus. Stimulates the GTPase/ATPase activities of Obg-like ATPases. Mediates the transient calcium-dependent interaction of PYR/PYL/RCAR abscisic acid (ABA) receptors with the plasma membrane and thus regulates ABA sensitivity. This chain is Protein C2-DOMAIN ABA-RELATED 2, found in Arabidopsis thaliana (Mouse-ear cress).